Reading from the N-terminus, the 448-residue chain is tRNA-2-methylthio-N(6)-dimethylallyladenosine synthase (448 aa).

The MTTase N-terminal domain occupies 7–123 (RSFYIHTFGC…LPALIGDAEE (117 aa)). Residues Cys16, Cys52, Cys86, Cys159, Cys163, and Cys166 each coordinate [4Fe-4S] cluster. The region spanning 145 to 375 (REVGVGAFVP…IDLQLSISAE (231 aa)) is the Radical SAM core domain. A TRAM domain is found at 378 to 441 (QEAVGSVVDV…SATLTGVNQG (64 aa)).

It belongs to the methylthiotransferase family. MiaB subfamily. Monomer. [4Fe-4S] cluster is required as a cofactor.

The protein resides in the cytoplasm. The enzyme catalyses N(6)-dimethylallyladenosine(37) in tRNA + (sulfur carrier)-SH + AH2 + 2 S-adenosyl-L-methionine = 2-methylsulfanyl-N(6)-dimethylallyladenosine(37) in tRNA + (sulfur carrier)-H + 5'-deoxyadenosine + L-methionine + A + S-adenosyl-L-homocysteine + 2 H(+). Catalyzes the methylthiolation of N6-(dimethylallyl)adenosine (i(6)A), leading to the formation of 2-methylthio-N6-(dimethylallyl)adenosine (ms(2)i(6)A) at position 37 in tRNAs that read codons beginning with uridine. This chain is tRNA-2-methylthio-N(6)-dimethylallyladenosine synthase, found in Chlorobium phaeovibrioides (strain DSM 265 / 1930) (Prosthecochloris vibrioformis (strain DSM 265)).